The chain runs to 34 residues: Photosystem II reaction center protein M (34 aa).

Residues 5 to 25 (ILAFIATTLFVLVPTAFLLII) traverse the membrane as a helical segment.

Belongs to the PsbM family. As to quaternary structure, PSII is composed of 1 copy each of membrane proteins PsbA, PsbB, PsbC, PsbD, PsbE, PsbF, PsbH, PsbI, PsbJ, PsbK, PsbL, PsbM, PsbT, PsbX, PsbY, PsbZ, Psb30/Ycf12, at least 3 peripheral proteins of the oxygen-evolving complex and a large number of cofactors. It forms dimeric complexes.

The protein localises to the plastid. The protein resides in the chloroplast thylakoid membrane. One of the components of the core complex of photosystem II (PSII). PSII is a light-driven water:plastoquinone oxidoreductase that uses light energy to abstract electrons from H(2)O, generating O(2) and a proton gradient subsequently used for ATP formation. It consists of a core antenna complex that captures photons, and an electron transfer chain that converts photonic excitation into a charge separation. This subunit is found at the monomer-monomer interface. This chain is Photosystem II reaction center protein M, found in Citrus sinensis (Sweet orange).